Here is a 161-residue protein sequence, read N- to C-terminus: 2-C-methyl-D-erythritol 2,4-cyclodiphosphate synthase (161 aa).

Asp-11 and His-13 together coordinate a divalent metal cation. Residues 11–13 (DIH) and 37–38 (HS) each bind 4-CDP-2-C-methyl-D-erythritol 2-phosphate. His-45 is an a divalent metal cation binding site. 4-CDP-2-C-methyl-D-erythritol 2-phosphate is bound by residues 59-61 (DIG), 135-138 (TTNE), and Arg-145.

The protein belongs to the IspF family. In terms of assembly, homotrimer. It depends on a divalent metal cation as a cofactor.

The catalysed reaction is 4-CDP-2-C-methyl-D-erythritol 2-phosphate = 2-C-methyl-D-erythritol 2,4-cyclic diphosphate + CMP. The protein operates within isoprenoid biosynthesis; isopentenyl diphosphate biosynthesis via DXP pathway; isopentenyl diphosphate from 1-deoxy-D-xylulose 5-phosphate: step 4/6. Involved in the biosynthesis of isopentenyl diphosphate (IPP) and dimethylallyl diphosphate (DMAPP), two major building blocks of isoprenoid compounds. Catalyzes the conversion of 4-diphosphocytidyl-2-C-methyl-D-erythritol 2-phosphate (CDP-ME2P) to 2-C-methyl-D-erythritol 2,4-cyclodiphosphate (ME-CPP) with a corresponding release of cytidine 5-monophosphate (CMP). The chain is 2-C-methyl-D-erythritol 2,4-cyclodiphosphate synthase from Synechocystis sp. (strain ATCC 27184 / PCC 6803 / Kazusa).